Consider the following 362-residue polypeptide: 3-dehydroquinate synthase (362 aa).

NAD(+)-binding positions include 71–76 (DGEKYK), 105–109 (GVIGD), 129–130 (TT), lysine 142, and lysine 151. Glutamate 184, histidine 248, and histidine 265 together coordinate Zn(2+).

The protein belongs to the sugar phosphate cyclases superfamily. Dehydroquinate synthase family. Co(2+) serves as cofactor. Zn(2+) is required as a cofactor. Requires NAD(+) as cofactor.

The protein localises to the cytoplasm. It catalyses the reaction 7-phospho-2-dehydro-3-deoxy-D-arabino-heptonate = 3-dehydroquinate + phosphate. It participates in metabolic intermediate biosynthesis; chorismate biosynthesis; chorismate from D-erythrose 4-phosphate and phosphoenolpyruvate: step 2/7. In terms of biological role, catalyzes the conversion of 3-deoxy-D-arabino-heptulosonate 7-phosphate (DAHP) to dehydroquinate (DHQ). The protein is 3-dehydroquinate synthase of Hamiltonella defensa subsp. Acyrthosiphon pisum (strain 5AT).